A 263-amino-acid chain; its full sequence is Ret finger protein-like 4B (263 aa).

The RING-type zinc finger occupies 11–53 (CPVCLDFFSCSISLSCTHVFCFDCIQRYILENHDFRAMCPLCR). A B30.2/SPRY domain is found at 76–263 (HNSRLEQSLH…ESGNVLTICP (188 aa)).

The polypeptide is Ret finger protein-like 4B (RFPL4B) (Homo sapiens (Human)).